The following is a 239-amino-acid chain: MKALIPKQHGAWAMLLIPFLLGMVKGGPVIWHIPLFLGWLFLYLAVYPVTLALKKKQSKPYQKWMCYYGFPTCCFLMISVFHKPPLIWVGVSLLPLFLIHMYFARRKNERALLNDVAGVLFFCSGGFASCWLGMGTLDGWAWFIFLQSALFFIGSSFYVKSVIRERKNRAFAYWSWGYHLLLPFLSALFGAGWAFLAFIPSSLRAWFFHGRDWPVKTIGILEIVNACFFLAVMCLFITR.

Helical transmembrane passes span Leu4 to Val24, Val29 to Val49, Tyr61 to Phe81, Pro84 to Ala104, Val116 to Thr136, Gly139 to Val159, Leu180 to Pro200, and Ile218 to Thr238.

The protein to H.influenzae HI_1626.

It localises to the cell membrane. This is an uncharacterized protein from Bacillus subtilis (strain 168).